A 198-amino-acid polypeptide reads, in one-letter code: Na(+)-translocating NADH-quinone reductase subunit E (198 aa).

Helical transmembrane passes span Ser11–Val31, Val35–Ala55, Phe77–Ile97, Gly110–Val130, Val140–Ile160, and Leu176–Ile196.

This sequence belongs to the NqrDE/RnfAE family. As to quaternary structure, composed of six subunits; NqrA, NqrB, NqrC, NqrD, NqrE and NqrF.

It localises to the cell inner membrane. It catalyses the reaction a ubiquinone + n Na(+)(in) + NADH + H(+) = a ubiquinol + n Na(+)(out) + NAD(+). Functionally, NQR complex catalyzes the reduction of ubiquinone-1 to ubiquinol by two successive reactions, coupled with the transport of Na(+) ions from the cytoplasm to the periplasm. NqrA to NqrE are probably involved in the second step, the conversion of ubisemiquinone to ubiquinol. This chain is Na(+)-translocating NADH-quinone reductase subunit E, found in Glaesserella parasuis serovar 5 (strain SH0165) (Haemophilus parasuis).